A 125-amino-acid chain; its full sequence is ASPEAYVEYRKQALKASGDHMKALSAIVKGQLPLNAEAAKHAEAIAAIMESLPAAFPEGTAGIAKTEAKAVVWSKADEFKADAVKSADAAKALAQAATAGDTAQMGKALAALGGTCKGCHETFRE.

Heme c is bound by residues R10, E67, C116, C119, and H120.

In terms of assembly, homodimer. In terms of processing, binds 1 heme c group covalently per subunit.

Functionally, cytochrome c' is the most widely occurring bacterial c-type cytochrome. Cytochromes c' are high-spin proteins and the heme has no sixth ligand. Their exact function is not known. The polypeptide is Cytochrome c' (Pararhodospirillum photometricum (Rhodospirillum photometricum)).